The sequence spans 298 residues: GTPase Era (298 aa).

Residues 3–170 (KSGFVAILGR…IKLLTDNLEE (168 aa)) enclose the Era-type G domain. The segment at 11 to 18 (GRPNVGKS) is G1. 11–18 (GRPNVGKS) is a GTP binding site. The G2 stretch occupies residues 37-41 (QTTRN). The tract at residues 58–61 (DTPG) is G3. GTP is bound by residues 58 to 62 (DTPGI) and 120 to 123 (NKID). Positions 120 to 123 (NKID) are G4. Residues 149–151 (ISA) are G5. The KH type-2 domain maps to 201–279 (TQQEVPHSVA…YLETWVKVKK (79 aa)).

It belongs to the TRAFAC class TrmE-Era-EngA-EngB-Septin-like GTPase superfamily. Era GTPase family. Monomer.

The protein resides in the cytoplasm. It localises to the cell membrane. Functionally, an essential GTPase that binds both GDP and GTP, with rapid nucleotide exchange. Plays a role in 16S rRNA processing and 30S ribosomal subunit biogenesis and possibly also in cell cycle regulation and energy metabolism. In Streptococcus pyogenes serotype M4 (strain MGAS10750), this protein is GTPase Era.